The sequence spans 172 residues: MTYFMFLLLMALVVGLVAVASNPTPYFAALGLVVAAGVGCGVLVGHGGSFLSLVLFLIYLGGMLVVFAYAALAAEPFPEAWGSRSVLGYVLVYLLGVGLVAGIFWGGWYEGSWVVVDGLKEFSVLRGDISGVAVMYSSGGGMLVICAWVLLLTLLVVLELTRGLSRGALRAV.

A run of 5 helical transmembrane segments spans residues 1-21 (MTYFMFLLLMALVVGLVAVAS), 25-45 (PYFAALGLVVAAGVGCGVLVG), 53-73 (LVLFLIYLGGMLVVFAYAALA), 86-106 (VLGYVLVYLLGVGLVAGIFWG), and 140-160 (GGMLVICAWVLLLTLLVVLEL).

Belongs to the complex I subunit 6 family.

Its subcellular location is the mitochondrion membrane. The enzyme catalyses a ubiquinone + NADH + 5 H(+)(in) = a ubiquinol + NAD(+) + 4 H(+)(out). Functionally, core subunit of the mitochondrial membrane respiratory chain NADH dehydrogenase (Complex I) that is believed to belong to the minimal assembly required for catalysis. Complex I functions in the transfer of electrons from NADH to the respiratory chain. The immediate electron acceptor for the enzyme is believed to be ubiquinone. This chain is NADH-ubiquinone oxidoreductase chain 6 (MT-ND6), found in Cyprinus carpio (Common carp).